Consider the following 367-residue polypeptide: UDP-N-acetylglucosamine--N-acetylmuramyl-(pentapeptide) pyrophosphoryl-undecaprenol N-acetylglucosamine transferase (367 aa).

UDP-N-acetyl-alpha-D-glucosamine is bound by residues 15–17, N127, R163, S191, I249, and Q294; that span reads TGG.

Belongs to the glycosyltransferase 28 family. MurG subfamily.

The protein resides in the cell inner membrane. It carries out the reaction di-trans,octa-cis-undecaprenyl diphospho-N-acetyl-alpha-D-muramoyl-L-alanyl-D-glutamyl-meso-2,6-diaminopimeloyl-D-alanyl-D-alanine + UDP-N-acetyl-alpha-D-glucosamine = di-trans,octa-cis-undecaprenyl diphospho-[N-acetyl-alpha-D-glucosaminyl-(1-&gt;4)]-N-acetyl-alpha-D-muramoyl-L-alanyl-D-glutamyl-meso-2,6-diaminopimeloyl-D-alanyl-D-alanine + UDP + H(+). It functions in the pathway cell wall biogenesis; peptidoglycan biosynthesis. Functionally, cell wall formation. Catalyzes the transfer of a GlcNAc subunit on undecaprenyl-pyrophosphoryl-MurNAc-pentapeptide (lipid intermediate I) to form undecaprenyl-pyrophosphoryl-MurNAc-(pentapeptide)GlcNAc (lipid intermediate II). The chain is UDP-N-acetylglucosamine--N-acetylmuramyl-(pentapeptide) pyrophosphoryl-undecaprenol N-acetylglucosamine transferase from Burkholderia vietnamiensis (strain G4 / LMG 22486) (Burkholderia cepacia (strain R1808)).